The primary structure comprises 70 residues: UPF0352 protein Sden_2336 (70 aa).

Belongs to the UPF0352 family.

The polypeptide is UPF0352 protein Sden_2336 (Shewanella denitrificans (strain OS217 / ATCC BAA-1090 / DSM 15013)).